The primary structure comprises 562 residues: mRNA cleavage and polyadenylation factor CLP1 (562 aa).

A disordered region spans residues 1-27; sequence MSLPGLELSQQPIEARRAPPQPTQISL. Residues E32, K71, and 154-159 contribute to the ATP site; that span reads DAGKTS. Positions 415–483 are disordered; that stretch reads EDEYDPSKFD…STTPFTNLPS (69 aa). Low complexity predominate over residues 445 to 479; sequence SLQPPSGLLPGLRSELPSATTGFPSASTSSTTPFT.

The protein belongs to the Clp1 family. Clp1 subfamily. As to quaternary structure, component of a pre-mRNA cleavage factor complex. Interacts directly with PCF11.

It is found in the nucleus. Functionally, required for endonucleolytic cleavage during polyadenylation-dependent pre-mRNA 3'-end formation. The protein is mRNA cleavage and polyadenylation factor CLP1 of Coccidioides immitis (strain RS) (Valley fever fungus).